Consider the following 99-residue polypeptide: Integration host factor subunit beta (99 aa).

It belongs to the bacterial histone-like protein family. As to quaternary structure, heterodimer of an alpha and a beta chain.

This protein is one of the two subunits of integration host factor, a specific DNA-binding protein that functions in genetic recombination as well as in transcriptional and translational control. This Rhizobium etli (strain CIAT 652) protein is Integration host factor subunit beta.